Here is a 136-residue protein sequence, read N- to C-terminus: Protein PsiE (136 aa).

4 helical membrane passes run 15 to 35 (ILQTVLNLGLLCLGLILVVFL), 55 to 75 (YELVEGLVVYFLYFEFIALIV), 82 to 102 (FHFPLRYFVYIGITAIVRLII), and 108 to 128 (PLDVLIYSAAILLLVITLWLC).

Belongs to the PsiE family.

It is found in the cell inner membrane. The sequence is that of Protein PsiE from Escherichia coli (strain SE11).